A 90-amino-acid polypeptide reads, in one-letter code: Small ribosomal subunit protein uS17 (90 aa).

The protein belongs to the universal ribosomal protein uS17 family. Part of the 30S ribosomal subunit.

One of the primary rRNA binding proteins, it binds specifically to the 5'-end of 16S ribosomal RNA. This chain is Small ribosomal subunit protein uS17, found in Burkholderia ambifaria (strain ATCC BAA-244 / DSM 16087 / CCUG 44356 / LMG 19182 / AMMD) (Burkholderia cepacia (strain AMMD)).